The chain runs to 309 residues: MKILGIETSHDDTSIAILENNKVVALETISQVDIFKEFGGTIPEISSREHVKNINLILEILIKKHDLSTIDYVAYTKEPGLVGTLQIGYLFANAVSLAYNKPIIPINHLAGHFYSCAIDHEINYPSLCLLVSGGHTQLMLINNPNDFQIIGQTLDDAVGEAFDKVSSKLQLGFPGGPIIDKIYKNYNGEFIKFTEPHAPGEYNFSFSGLKSQVINYYHNKIQRNEAIDINQIAASFQDCAVSYLINQTKKALRKYNVKSLVLAGGVSANSELRKRFLEISNIAIIPDLKYATDNGAMIASCAYQMLKEK.

His-108 and His-112 together coordinate Fe cation. Substrate-binding positions include 130–134, Asp-163, Gly-176, Asp-180, and Asn-269; that span reads LVSGG. Position 293 (Asp-293) interacts with Fe cation.

This sequence belongs to the KAE1 / TsaD family. It depends on Fe(2+) as a cofactor.

The protein localises to the cytoplasm. It catalyses the reaction L-threonylcarbamoyladenylate + adenosine(37) in tRNA = N(6)-L-threonylcarbamoyladenosine(37) in tRNA + AMP + H(+). Required for the formation of a threonylcarbamoyl group on adenosine at position 37 (t(6)A37) in tRNAs that read codons beginning with adenine. Is involved in the transfer of the threonylcarbamoyl moiety of threonylcarbamoyl-AMP (TC-AMP) to the N6 group of A37, together with TsaE and TsaB. TsaD likely plays a direct catalytic role in this reaction. The polypeptide is tRNA N6-adenosine threonylcarbamoyltransferase (Mycoplasmopsis agalactiae (strain NCTC 10123 / CIP 59.7 / PG2) (Mycoplasma agalactiae)).